The following is a 39-amino-acid chain: Mu-theraphotoxin-Ae1a (39 aa).

Cystine bridges form between Cys7–Cys21, Cys14–Cys26, and Cys20–Cys33. A Phenylalanine amide modification is found at Phe39.

The protein belongs to the neurotoxin 10 (Hwtx-1) family. 47 subfamily. Expressed by the venom gland.

The protein resides in the secreted. Insecticidal toxin that acts, at least partially, by inhibiting insect voltage-gated sodium (NaV) channels of several insect species. The toxin binds to the voltage sensor in NaV channel domain II and inhibits channel opening by shifting the threshold for channel activation to more positive voltages. The toxin binding is sensitive to residues in the S1-S2 loop of the domain II voltage sensor. In vivo, the recombinant toxin causes paralysis and/or death to two dipteran species (Lucilia cuprina and Drosophila melanogaster). In contrast, the toxin does not show paralytic or lethal effect on the cotton bollworm Helicoverpa armigera and the triatomine bug Rhodinius prolixus. This is Mu-theraphotoxin-Ae1a from Augacephalus ezendami (Mozambique baboon spider).